The sequence spans 702 residues: Polyribonucleotide nucleotidyltransferase (702 aa).

Mg(2+) is bound by residues Asp493 and Asp499. A KH domain is found at 559–619 (PKVEIFNVDP…NLISQSKEYI (61 aa)). The S1 motif domain maps to 643-702 (GEEFLGRVQKVVEFGVFVELKEGVDGLLHNSKIKEKLEVGHEIKVKVAEIKNGKVSLDLA).

Belongs to the polyribonucleotide nucleotidyltransferase family. It depends on Mg(2+) as a cofactor.

The protein localises to the cytoplasm. It carries out the reaction RNA(n+1) + phosphate = RNA(n) + a ribonucleoside 5'-diphosphate. Its function is as follows. Involved in mRNA degradation. Catalyzes the phosphorolysis of single-stranded polyribonucleotides processively in the 3'- to 5'-direction. The chain is Polyribonucleotide nucleotidyltransferase from Campylobacter lari (strain RM2100 / D67 / ATCC BAA-1060).